A 1584-amino-acid chain; its full sequence is Kinesin-like protein unc-104 (1584 aa).

The region spanning 3–347 is the Kinesin motor domain; the sequence is SVKVAVRVRP…LRYADRAKQI (345 aa). 93-100 provides a ligand contact to ATP; that stretch reads GQTGSGKS. The segment at 183-335 is microtubule-binding; it reads VCSYHDICNL…PADINFDETL (153 aa). 3 coiled-coil regions span residues 425–445, 598–652, and 777–797; these read EQKL…LRDM, IDLK…SYIS, and SIEK…TDAE. A disordered region spans residues 1366 to 1416; the sequence is IPMNKDPPTGNKAQELSDESGSNSITSPVSDKSLIKSSRSSDLLCRQKSKS. Over residues 1376–1394 the composition is skewed to polar residues; sequence NKAQELSDESGSNSITSPV. A compositionally biased stretch (low complexity) spans 1395–1409; it reads SDKSLIKSSRSSDLL. Positions 1460 to 1558 constitute a PH domain; the sequence is VVSKKGYMNF…WLYAINPLMA (99 aa).

This sequence belongs to the TRAFAC class myosin-kinesin ATPase superfamily. Kinesin family. Unc-104 subfamily. Interacts with casy-1. In terms of tissue distribution, expressed in nerve ring, amphid commissure and ventral nerve cord (at protein level).

It localises to the cytoplasm. The protein resides in the cytoskeleton. The protein localises to the cell projection. Its subcellular location is the axon. Motor protein involved in microtubule-associated anterograde transport. Regulates the transport of synaptic vesicle precursors in the axon of DA motor neurons. Regulates the polarized sorting of axonal proteins. Essential for the transport of synaptic components during the synaptic remodeling of the DD motor neuron, probably downstream of cdk-5 and/or pct-1/cyy-1 complex. Required for the anterograde transport of neuropeptide-containing dense core vesicles along axons. Involved in necrotic cell death. The sequence is that of Kinesin-like protein unc-104 (unc-104) from Caenorhabditis elegans.